The following is a 309-amino-acid chain: 15-cis-phytoene synthase (309 aa).

The segment at 290–309 is disordered; that stretch reads LTSRMRAHPPRPAHLWQRPL.

It belongs to the phytoene/squalene synthase family. Requires ATP as cofactor. Mn(2+) serves as cofactor. It depends on Mg(2+) as a cofactor.

The catalysed reaction is 2 (2E,6E,10E)-geranylgeranyl diphosphate = 15-cis-phytoene + 2 diphosphate. The protein operates within carotenoid biosynthesis; phytoene biosynthesis. Its activity is regulated as follows. Inhibited by phosphate ions and squalestatin. In terms of biological role, involved in the biosynthesis of carotenoids. Catalyzes the condensation of two molecules of geranylgeranyl diphosphate (GGPP) to give prephytoene diphosphate (PPPP) and the subsequent rearrangement of the cyclopropylcarbinyl intermediate to yield the 15-cis-phytoene isomer. This Pantoea ananas (Erwinia uredovora) protein is 15-cis-phytoene synthase (crtB).